Reading from the N-terminus, the 306-residue chain is Meiotically up-regulated gene 73 protein (306 aa).

7 consecutive transmembrane segments (helical) span residues 28 to 48 (YWAV…VSIF), 59 to 79 (FFSI…CNYG), 103 to 123 (YIQW…TVGV), 125 to 145 (ILEI…LLAA), 154 to 174 (WAYY…SVVL), 190 to 210 (FLWS…CWIL), and 224 to 244 (IFYS…FSWM).

Belongs to the archaeal/bacterial/fungal opsin family.

It localises to the membrane. Its function is as follows. Has a role in meiosis. This is Meiotically up-regulated gene 73 protein (mug73) from Schizosaccharomyces pombe (strain 972 / ATCC 24843) (Fission yeast).